The sequence spans 583 residues: Selenocysteine-specific elongation factor (583 aa).

The tr-type G domain maps to 5-203; that stretch reads RVNVNVGVLG…LLKSQISIPT (199 aa). Positions 14 to 21 are G1; that stretch reads GHIDSGKT. Positions 19, 21, and 22 each coordinate GTP. Thr21 contacts Mg(2+). A G2 region spans residues 46–50; the sequence is GITLD. The Mg(2+) site is built by Thr48 and Asp78. Residues 78-81 form a G3 region; sequence DCPG. A G4 region spans residues 132–135; the sequence is NKID. Residues Asp135 and Lys173 each contribute to the GTP site. The tract at residues 171-173 is G5; the sequence is AAK. A disordered region spans residues 371–390; it reads MPTATEGDDEADPKAGHAPG. At Ser524 the chain carries Phosphoserine. The interval 528–562 is disordered; the sequence is KKILTPTLKKRSRAGRGETTKPEEGTERPEPIQPV. The residue at position 532 (Thr532) is a Phosphothreonine. The Nuclear localization signal motif lies at 534–540; the sequence is TLKKRSR. A compositionally biased stretch (basic and acidic residues) spans 542 to 557; that stretch reads GRGETTKPEEGTERPE. Residue Arg543 is modified to Omega-N-methylarginine.

This sequence belongs to the TRAFAC class translation factor GTPase superfamily. Classic translation factor GTPase family. SelB subfamily. Mg(2+) is required as a cofactor. The cofactor is Mn(2+).

The protein localises to the cytoplasm. Its subcellular location is the nucleus. It catalyses the reaction GTP + H2O = GDP + phosphate + H(+). In terms of biological role, translation factor required for the incorporation of the rare amino acid selenocysteine encoded by UGA codons. Replaces the eRF1-eRF3-GTP ternary complex for the insertion of selenocysteine directed by the UGA codon. Insertion of selenocysteine at UGA codons is mediated by SECISBP2 and EEFSEC: SECISBP2 (1) specifically binds the SECIS sequence once the 80S ribosome encounters an in-frame UGA codon and (2) contacts the RPS27A/eS31 of the 40S ribosome before ribosome stalling. (3) GTP-bound EEFSEC then delivers selenocysteinyl-tRNA(Sec) to the 80S ribosome and adopts a preaccommodated state conformation. (4) After GTP hydrolysis, EEFSEC dissociates from the assembly, selenocysteinyl-tRNA(Sec) accommodates, and peptide bond synthesis and selenoprotein elongation occur. The chain is Selenocysteine-specific elongation factor (Eefsec) from Mus musculus (Mouse).